Here is a 214-residue protein sequence, read N- to C-terminus: uncharacterized protein (214 aa).

A run of 4 helical transmembrane segments spans residues 10-30 (IPPL…SLGI), 55-75 (IGVG…GYAI), 147-167 (VSGA…AGMA), and 174-194 (RFSW…AILL).

Belongs to the DedA family.

The protein localises to the cell membrane. This is an uncharacterized protein from Mycobacterium leprae (strain TN).